Reading from the N-terminus, the 162-residue chain is Transcription elongation factor GreA (162 aa).

Positions glutamate 45–glutamate 74 form a coiled coil.

It belongs to the GreA/GreB family.

In terms of biological role, necessary for efficient RNA polymerase transcription elongation past template-encoded arresting sites. The arresting sites in DNA have the property of trapping a certain fraction of elongating RNA polymerases that pass through, resulting in locked ternary complexes. Cleavage of the nascent transcript by cleavage factors such as GreA or GreB allows the resumption of elongation from the new 3'terminus. GreA releases sequences of 2 to 3 nucleotides. The polypeptide is Transcription elongation factor GreA (Rickettsia conorii (strain ATCC VR-613 / Malish 7)).